Consider the following 138-residue polypeptide: Nucleoside diphosphate kinase (138 aa).

Residues lysine 10, phenylalanine 58, arginine 86, threonine 92, arginine 103, and asparagine 113 each contribute to the ATP site. Histidine 116 serves as the catalytic Pros-phosphohistidine intermediate.

It belongs to the NDK family. As to quaternary structure, homotetramer. Mg(2+) is required as a cofactor.

It localises to the cytoplasm. It carries out the reaction a 2'-deoxyribonucleoside 5'-diphosphate + ATP = a 2'-deoxyribonucleoside 5'-triphosphate + ADP. The enzyme catalyses a ribonucleoside 5'-diphosphate + ATP = a ribonucleoside 5'-triphosphate + ADP. Major role in the synthesis of nucleoside triphosphates other than ATP. The ATP gamma phosphate is transferred to the NDP beta phosphate via a ping-pong mechanism, using a phosphorylated active-site intermediate. This chain is Nucleoside diphosphate kinase, found in Haemophilus ducreyi (strain 35000HP / ATCC 700724).